The chain runs to 396 residues: Orotidine 5'-phosphate decarboxylase (396 aa).

Substrate contacts are provided by residues Asp46, 68-70 (KTH), 103-112 (DRKFVDIGST), Tyr346, and Arg365. Lys105 (proton donor) is an active-site residue.

It belongs to the OMP decarboxylase family.

The catalysed reaction is orotidine 5'-phosphate + H(+) = UMP + CO2. The protein operates within pyrimidine metabolism; UMP biosynthesis via de novo pathway; UMP from orotate: step 2/2. The sequence is that of Orotidine 5'-phosphate decarboxylase (URA3) from Sordaria macrospora (strain ATCC MYA-333 / DSM 997 / K(L3346) / K-hell).